Here is a 667-residue protein sequence, read N- to C-terminus: uncharacterized protein (667 aa).

This is an uncharacterized protein from Magallana gigas (Pacific oyster).